The following is a 265-amino-acid chain: Hydroxyethylthiazole kinase (265 aa).

M36 contributes to the substrate binding site. Residues K112 and S160 each coordinate ATP. Residue G187 coordinates substrate.

Belongs to the Thz kinase family. Requires Mg(2+) as cofactor.

It catalyses the reaction 5-(2-hydroxyethyl)-4-methylthiazole + ATP = 4-methyl-5-(2-phosphooxyethyl)-thiazole + ADP + H(+). It functions in the pathway cofactor biosynthesis; thiamine diphosphate biosynthesis; 4-methyl-5-(2-phosphoethyl)-thiazole from 5-(2-hydroxyethyl)-4-methylthiazole: step 1/1. In terms of biological role, catalyzes the phosphorylation of the hydroxyl group of 4-methyl-5-beta-hydroxyethylthiazole (THZ). In Clostridium perfringens (strain 13 / Type A), this protein is Hydroxyethylthiazole kinase.